We begin with the raw amino-acid sequence, 156 residues long: Small ribosomal subunit protein uS7 (156 aa).

The protein belongs to the universal ribosomal protein uS7 family. In terms of assembly, part of the 30S ribosomal subunit. Contacts proteins S9 and S11.

Its function is as follows. One of the primary rRNA binding proteins, it binds directly to 16S rRNA where it nucleates assembly of the head domain of the 30S subunit. Is located at the subunit interface close to the decoding center, probably blocks exit of the E-site tRNA. The protein is Small ribosomal subunit protein uS7 of Trichlorobacter lovleyi (strain ATCC BAA-1151 / DSM 17278 / SZ) (Geobacter lovleyi).